The primary structure comprises 419 residues: Tol-Pal system protein TolB (419 aa).

The first 17 residues, 1 to 17 (MRFIGLVLLLLSVKLFG), serve as a signal peptide directing secretion.

Belongs to the TolB family. In terms of assembly, the Tol-Pal system is composed of five core proteins: the inner membrane proteins TolA, TolQ and TolR, the periplasmic protein TolB and the outer membrane protein Pal. They form a network linking the inner and outer membranes and the peptidoglycan layer.

It is found in the periplasm. Its function is as follows. Part of the Tol-Pal system, which plays a role in outer membrane invagination during cell division and is important for maintaining outer membrane integrity. This chain is Tol-Pal system protein TolB, found in Helicobacter hepaticus (strain ATCC 51449 / 3B1).